We begin with the raw amino-acid sequence, 452 residues long: Phosphoglucosamine mutase (452 aa).

S105 acts as the Phosphoserine intermediate in catalysis. Mg(2+)-binding residues include S105, D244, D246, and D248. Residue S105 is modified to Phosphoserine.

Belongs to the phosphohexose mutase family. Mg(2+) serves as cofactor. Post-translationally, activated by phosphorylation.

The catalysed reaction is alpha-D-glucosamine 1-phosphate = D-glucosamine 6-phosphate. Its function is as follows. Catalyzes the conversion of glucosamine-6-phosphate to glucosamine-1-phosphate. The sequence is that of Phosphoglucosamine mutase from Blochmanniella floridana.